The chain runs to 1016 residues: Enhancer of polycomb-like protein 1 (1016 aa).

5 disordered regions span residues 1-50, 96-119, 450-488, 499-518, and 842-1016; these read MAIH…NDLE, LLGS…DASV, KEED…TIGT, GQVH…VKLP, and ARMR…PNRK. Over residues 35–50 the composition is skewed to polar residues; that stretch reads YKQSDLPTLNASNDLE. Composition is skewed to basic and acidic residues over residues 103 to 116 and 457 to 473; these read DGDK…KKTD and ESSK…DSSR. Polar residues predominate over residues 475–488; that stretch reads GSATSMPGSATIGT. Positions 842 to 883 are enriched in low complexity; that stretch reads ARMRTLQQQQRNNKQQAAGQSSGSSSASLGSNTNSNSSISGQ. Positions 884–902 are enriched in polar residues; the sequence is ADQGQTNLTNSGITRQGGA. The span at 904–923 shows a compositional bias: low complexity; that stretch reads VNGSQTSTTNNTRSSVSGGS. Polar residues predominate over residues 928–956; that stretch reads LPTQSSQRSNTNSPLLASQPQGYSQQQKF. The span at 960–971 shows a compositional bias: low complexity; that stretch reads PPTSQSQSQSPT. Residues 976–994 show a composition bias toward polar residues; that stretch reads QLQTSKMYNKHGSNITPSN.

This sequence belongs to the enhancer of polycomb family. In terms of assembly, component of the NuA4 histone acetyltransferase complex.

Its subcellular location is the nucleus. Component of the NuA4 histone acetyltransferase complex which is involved in transcriptional activation of selected genes principally by acetylation of nucleosomal histone H4 and H2A. The NuA4 complex is also involved in DNA repair. Involved in gene silencing by neighboring heterochromatin, blockage of the silencing spreading along the chromosome, and required for cell cycle progression through G2/M. The protein is Enhancer of polycomb-like protein 1 (EPL1) of Debaryomyces hansenii (strain ATCC 36239 / CBS 767 / BCRC 21394 / JCM 1990 / NBRC 0083 / IGC 2968) (Yeast).